Reading from the N-terminus, the 184-residue chain is Large ribosomal subunit protein uL5 (184 aa).

This sequence belongs to the universal ribosomal protein uL5 family. As to quaternary structure, part of the 50S ribosomal subunit; part of the 5S rRNA/L5/L18/L25 subcomplex. Contacts the 5S rRNA and the P site tRNA. Forms a bridge to the 30S subunit in the 70S ribosome.

In terms of biological role, this is one of the proteins that bind and probably mediate the attachment of the 5S RNA into the large ribosomal subunit, where it forms part of the central protuberance. In the 70S ribosome it contacts protein S13 of the 30S subunit (bridge B1b), connecting the 2 subunits; this bridge is implicated in subunit movement. Contacts the P site tRNA; the 5S rRNA and some of its associated proteins might help stabilize positioning of ribosome-bound tRNAs. The chain is Large ribosomal subunit protein uL5 from Corynebacterium kroppenstedtii (strain DSM 44385 / JCM 11950 / CIP 105744 / CCUG 35717).